Consider the following 231-residue polypeptide: MTMTTAAVFGCTGAVGSQILATLLAIDTFPSVKTISRRLPNVQSPKLEAIEEGDSSKWGGMISSFSPKPSVVFNAVGTTRAAAGGLQNQWKIDHDLCIENARAAKEAGVKTYVFISGAGIRGFVARYLPFSKMKIGVEDAIKDLDFEHAIILRPGMIIGRENPKSALLENIVGGLNKLGQGIQDSLGQDQTVIARAAVAAARMADEGKAPSKYWVVEMADIVRLGRDEWKE.

The transit peptide at 1–46 (MTMTTAAVFGCTGAVGSQILATLLAIDTFPSVKTISRRLPNVQSPK) directs the protein to the mitochondrion.

This sequence belongs to the FMP52 family.

The protein localises to the mitochondrion outer membrane. The polypeptide is Protein fmp52-2, mitochondrial (fmp522) (Neosartorya fischeri (strain ATCC 1020 / DSM 3700 / CBS 544.65 / FGSC A1164 / JCM 1740 / NRRL 181 / WB 181) (Aspergillus fischerianus)).